Consider the following 466-residue polypeptide: MLSVYEKVNALDKRAIEELFLSEDILMENAAMALERAVLQNASLGAKVIILCGSGDNGGDGYALARRLVGRFKTLVFEMKLAKSPMCQLQQERAKKAGVVIKAYEENALNQNLECDVLIDCVIGSHFKGKLEPFLNFESLSQKARFKIACDIPSGIDSKGRVDKGAFKADLTISMGAIKSCLLSDRAKDYVGELKVGHLGVFNQIYEIPTDTFLLEKSDLKLPLRDRKNAHKGDYGHAHVLLGKHSGAGLLSALSALSFGSGVVSVQALECEITSNNKPLELVFCENFPNLLSAFALGMGLENIPKDFNKWLELAPCVLDAGVFYHKEVLQALEKEVILTPHPKEFLSLLKLVGINISMLELLDNKLEIARDFSQKYPKVVLLLKGANTLIAHQGQVFINILGSVALAKAGSGDVLAGLILSLLSQNYTPLDAAINASSAHALASLEFKNNYALTPLDLIEKIKQL.

An NAD(P)H-hydrate epimerase region spans residues 1 to 207; it reads MLSVYEKVNA…HLGVFNQIYE (207 aa). Residues 8-207 form the YjeF N-terminal domain; that stretch reads VNALDKRAIE…HLGVFNQIYE (200 aa). Residues 56-60 form an NADPHX 1; for epimerase activity region; the sequence is DNGGD. Residues N57 and D120 each contribute to the K(+) site. The tract at residues 124–130 is NADPHX 1; for epimerase activity; it reads GSHFKGK. Position 151 (D151) interacts with (6S)-NADPHX. S154 lines the K(+) pocket. Positions 215–466 constitute a YjeF C-terminal domain; that stretch reads LEKSDLKLPL…LDLIEKIKQL (252 aa). Positions 215–466 are ADP-dependent (S)-NAD(P)H-hydrate dehydratase; the sequence is LEKSDLKLPL…LDLIEKIKQL (252 aa). G300 provides a ligand contact to (6S)-NADPHX. The interval 342–348 is NADPHX 2; for dehydratase activity; the sequence is HPKEFLS. ADP contacts are provided by residues 385–389 and 404–413; these read KGANT and SVALAKAGSG. (6S)-NADPHX is bound at residue D414.

It in the N-terminal section; belongs to the NnrE/AIBP family. This sequence in the C-terminal section; belongs to the NnrD/CARKD family. K(+) serves as cofactor.

It catalyses the reaction (6S)-NADHX + ADP = AMP + phosphate + NADH + H(+). The enzyme catalyses (6S)-NADPHX + ADP = AMP + phosphate + NADPH + H(+). The catalysed reaction is (6R)-NADHX = (6S)-NADHX. It carries out the reaction (6R)-NADPHX = (6S)-NADPHX. Its function is as follows. Bifunctional enzyme that catalyzes the epimerization of the S- and R-forms of NAD(P)HX and the dehydration of the S-form of NAD(P)HX at the expense of ADP, which is converted to AMP. This allows the repair of both epimers of NAD(P)HX, a damaged form of NAD(P)H that is a result of enzymatic or heat-dependent hydration. The sequence is that of Bifunctional NAD(P)H-hydrate repair enzyme Nnr (nnr) from Helicobacter pylori (strain ATCC 700392 / 26695) (Campylobacter pylori).